Here is a 417-residue protein sequence, read N- to C-terminus: NADH-quinone oxidoreductase subunit D (417 aa).

Belongs to the complex I 49 kDa subunit family. NDH-1 is composed of 14 different subunits. Subunits NuoB, C, D, E, F, and G constitute the peripheral sector of the complex.

It is found in the cell inner membrane. It catalyses the reaction a quinone + NADH + 5 H(+)(in) = a quinol + NAD(+) + 4 H(+)(out). NDH-1 shuttles electrons from NADH, via FMN and iron-sulfur (Fe-S) centers, to quinones in the respiratory chain. The immediate electron acceptor for the enzyme in this species is believed to be ubiquinone. Couples the redox reaction to proton translocation (for every two electrons transferred, four hydrogen ions are translocated across the cytoplasmic membrane), and thus conserves the redox energy in a proton gradient. The sequence is that of NADH-quinone oxidoreductase subunit D from Paraburkholderia phymatum (strain DSM 17167 / CIP 108236 / LMG 21445 / STM815) (Burkholderia phymatum).